A 262-amino-acid polypeptide reads, in one-letter code: Adenosylcobinamide-GDP ribazoletransferase (262 aa).

A run of 6 helical transmembrane segments spans residues 43-63, 66-86, 120-140, 146-166, 191-211, and 242-262; these read YFGLVGLLVGLLSAIVFWLTQ, LPAGVSVLLAMLVGVLLTGGF, GALALMLALLLKWQLLVELAL, AGSALIVAHTVSRMVSASIIF, LLILIASGVLVLLFLKGLAAL, and AAQQIAEIVCYFVLLVVGNIL.

This sequence belongs to the CobS family. Requires Mg(2+) as cofactor.

Its subcellular location is the cell inner membrane. The catalysed reaction is alpha-ribazole + adenosylcob(III)inamide-GDP = adenosylcob(III)alamin + GMP + H(+). It catalyses the reaction alpha-ribazole 5'-phosphate + adenosylcob(III)inamide-GDP = adenosylcob(III)alamin 5'-phosphate + GMP + H(+). The protein operates within cofactor biosynthesis; adenosylcobalamin biosynthesis; adenosylcobalamin from cob(II)yrinate a,c-diamide: step 7/7. Functionally, joins adenosylcobinamide-GDP and alpha-ribazole to generate adenosylcobalamin (Ado-cobalamin). Also synthesizes adenosylcobalamin 5'-phosphate from adenosylcobinamide-GDP and alpha-ribazole 5'-phosphate. This chain is Adenosylcobinamide-GDP ribazoletransferase, found in Shewanella baltica (strain OS155 / ATCC BAA-1091).